We begin with the raw amino-acid sequence, 434 residues long: Ribosomal protein uS12 methylthiotransferase RimO (434 aa).

An MTTase N-terminal domain is found at 4–122 (NRVDVITLGC…LISHLGKSYY (119 aa)). Cysteine 13, cysteine 51, cysteine 85, cysteine 146, cysteine 150, and cysteine 153 together coordinate [4Fe-4S] cluster. Residues 132-363 (TTPRHYAYLK…MAVQERISAA (232 aa)) form the Radical SAM core domain. Residues 366-434 (EAKIGSRLRV…PFDLYARIVD (69 aa)) form the TRAM domain.

It belongs to the methylthiotransferase family. RimO subfamily. [4Fe-4S] cluster serves as cofactor.

The protein resides in the cytoplasm. It carries out the reaction L-aspartate(89)-[ribosomal protein uS12]-hydrogen + (sulfur carrier)-SH + AH2 + 2 S-adenosyl-L-methionine = 3-methylsulfanyl-L-aspartate(89)-[ribosomal protein uS12]-hydrogen + (sulfur carrier)-H + 5'-deoxyadenosine + L-methionine + A + S-adenosyl-L-homocysteine + 2 H(+). Catalyzes the methylthiolation of an aspartic acid residue of ribosomal protein uS12. This Porphyromonas gingivalis (strain ATCC 33277 / DSM 20709 / CIP 103683 / JCM 12257 / NCTC 11834 / 2561) protein is Ribosomal protein uS12 methylthiotransferase RimO.